Here is a 361-residue protein sequence, read N- to C-terminus: Serine/threonine-protein kinase SRK2I (361 aa).

The region spanning 22-278 (YDFVKDIGSG…IPEIKTHSWF (257 aa)) is the Protein kinase domain. Residues 28 to 36 (IGSGNFGVA) and lysine 51 contribute to the ATP site. Residue aspartate 141 is the Proton acceptor of the active site.

It belongs to the protein kinase superfamily. Ser/Thr protein kinase family. As to quaternary structure, interacts with ABI1. Interacts with I-2 and TOPP1. Interacts with FREE1 (via C-terminus). In terms of processing, autophosphorylated in vitro. As to expression, expressed at low levels in seeds, seedlings, roots (especially in tips), stems, leaves, shoots, flowers and siliques.

It carries out the reaction L-seryl-[protein] + ATP = O-phospho-L-seryl-[protein] + ADP + H(+). The enzyme catalyses L-threonyl-[protein] + ATP = O-phospho-L-threonyl-[protein] + ADP + H(+). With respect to regulation, activated by autophosphorylation of its activation loop. Functionally, together with SRK2D, key component and activator of the abscisic acid (ABA) signaling pathway that regulates numerous ABA responses, such as seed germination, Pro accumulation, root growth inhibition, dormancy and seedling growth, and, to a lesser extent, stomatal closure. In response to ABA, phosphorylates the ESCRT-I complex component FREE1, which is required for ABA-induced FREE1 nuclear import. This Arabidopsis thaliana (Mouse-ear cress) protein is Serine/threonine-protein kinase SRK2I (SRK2I).